We begin with the raw amino-acid sequence, 821 residues long: Palmitoyltransferase AKR1 (821 aa).

The interval 1–118 (MVDKDANNEL…KDTASRKSMD (118 aa)) is disordered. Over 1–400 (MVDKDANNEL…TIYLNPKIGK (400 aa)) the chain is Cytoplasmic. The segment covering 93–117 (IQDESVNDKTSEPDENKDTASRKSM) has biased composition (basic and acidic residues). ANK repeat units follow at residues 142 to 172 (PSLH…KAND), 176 to 205 (DGIT…SKAD), 213 to 243 (LKAS…DPTL), 247 to 277 (QSYN…STST), 289 to 318 (CDRT…DVSK), and 322 to 351 (NLFI…NIFA). The chain crosses the membrane as a helical span at residues 401 to 421 (LVTFFTPYIILPIMFQVCSFY). A topological domain (lumenal) is located at residue Asn-422. Residues 423–443 (GFVIPKLFFSVVLFAGSIYIL) form a helical membrane-spanning segment. Over 444 to 463 (QKLVIPTYLAEEKAIPKSPL) the chain is Cytoplasmic. Residues 464–484 (LAGIFSGTAFWCIVTWAFNII) form a helical membrane-spanning segment. The Lumenal portion of the chain corresponds to 485–494 (PTLLFKKFIS). The chain crosses the membrane as a helical span at residues 495–515 (NLVLSAFIYLFVWSFFKAMFI). Over 516–589 (NPGYVPVPSD…YNDIGVRNHK (74 aa)) the chain is Cytoplasmic. In terms of domain architecture, DHHC spans 546-596 (NFCVNTFVRKPLRSKYSRFNKKLIARFDHYCPWVYNDIGVRNHKLFVVFVY). The active-site S-palmitoyl cysteine intermediate is the Cys-576. Residues 590 to 610 (LFVVFVYSLNLAVLLFTHLSI) traverse the membrane as a helical segment. Topologically, residues 611 to 650 (KLFKNTEKMSGYDSDDESQKCWLLSDELCVGYKSHHFQFN) are lumenal. A helical membrane pass occupies residues 651 to 671 (LMLWCLIQYIWIAFLCLVQTF). Over 672–821 (QILKGLTTWE…YPPKLADVDA (150 aa)) the chain is Cytoplasmic.

The protein belongs to the DHHC palmitoyltransferase family. AKR/ZDHHC17 subfamily.

It is found in the early endosome membrane. Its subcellular location is the golgi apparatus membrane. It carries out the reaction L-cysteinyl-[protein] + hexadecanoyl-CoA = S-hexadecanoyl-L-cysteinyl-[protein] + CoA. Its function is as follows. Palmitoyltransferase specific for casein kinase 1. The polypeptide is Palmitoyltransferase AKR1 (AKR1) (Debaryomyces hansenii (strain ATCC 36239 / CBS 767 / BCRC 21394 / JCM 1990 / NBRC 0083 / IGC 2968) (Yeast)).